The chain runs to 293 residues: 4-hydroxy-tetrahydrodipicolinate synthase (293 aa).

Threonine 47 contributes to the pyruvate binding site. Residue tyrosine 135 is the Proton donor/acceptor of the active site. Lysine 164 serves as the catalytic Schiff-base intermediate with substrate. Isoleucine 206 is a binding site for pyruvate.

The protein belongs to the DapA family. Homotetramer; dimer of dimers.

The protein resides in the cytoplasm. It catalyses the reaction L-aspartate 4-semialdehyde + pyruvate = (2S,4S)-4-hydroxy-2,3,4,5-tetrahydrodipicolinate + H2O + H(+). It participates in amino-acid biosynthesis; L-lysine biosynthesis via DAP pathway; (S)-tetrahydrodipicolinate from L-aspartate: step 3/4. In terms of biological role, catalyzes the condensation of (S)-aspartate-beta-semialdehyde [(S)-ASA] and pyruvate to 4-hydroxy-tetrahydrodipicolinate (HTPA). In Flavobacterium psychrophilum (strain ATCC 49511 / DSM 21280 / CIP 103535 / JIP02/86), this protein is 4-hydroxy-tetrahydrodipicolinate synthase.